Reading from the N-terminus, the 485-residue chain is WAS/WASL-interacting protein family member 3 (485 aa).

Residues 1-30 (MPVPPPPPPPLPPPPPPLGAPPPPPPPGPP) are compositionally biased toward pro residues. A disordered region spans residues 1–485 (MPVPPPPPPP…NSQLSLKALR (485 aa)). 3 short sequence motifs (profilin-binding motif) span residues 3-8 (VPPPPP), 11-16 (LPPPPP), and 20-25 (APPPPP). One can recognise a WH2 domain in the interval 45–62 (GRSALLADIQQGTRLRKV). Arg46 carries the post-translational modification Asymmetric dimethylarginine. The short motif at 58–61 (RLRK) is the RLRK element. The span at 63-78 (TQINDRSAPQIESSKG) shows a compositional bias: polar residues. Ser150 carries the phosphoserine modification. 2 stretches are compositionally biased toward pro residues: residues 165–200 (PVPPRPSVPAPPPPTTPPPPPPPPPPPPPPPLPPAS) and 207–243 (VSPPVPPTKGNPSAVPAPIPCVPPLPPPPPTPPPLPP). Position 208 is a phosphoserine (Ser208). Positions 244 to 259 (ASALSEKAVRPQLAPL) are enriched in low complexity. 2 stretches are compositionally biased toward pro residues: residues 260-275 (HLPPIPPPLPLLPPYG) and 293-312 (PPAPPPPPPPPPPPPPPPLP). At Ser394 the chain carries Phosphoserine. The segment covering 396–407 (TTELSSKTQQPG) has biased composition (polar residues). Residues 417-441 (VIDDFESKFTFHSMEDFPPPDEYKP) show a composition bias toward basic and acidic residues. Residues 426–450 (TFHSMEDFPPPDEYKPGQKIYPSKV) carry the WASP-binding motif motif. A compositionally biased stretch (polar residues) spans 475-485 (RNSQLSLKALR).

The protein belongs to the verprolin family. As to quaternary structure, isoform 1 interacts with WASL (via WH1 domain), and monomeric and filamentous actin. As to expression, detected mainly in brain and at lower levels in heart and lung (at protein level). Also detected in testis but not in kidney, liver or spleen.

It localises to the cytoplasm. Functionally, may have a role in spermatogenesis. May be a regulator of cytoskeletal organization. The sequence is that of WAS/WASL-interacting protein family member 3 (Wipf3) from Rattus norvegicus (Rat).